A 288-amino-acid chain; its full sequence is Homoserine kinase (288 aa).

78–88 (PLARGLGSSSS) lines the ATP pocket.

The protein belongs to the GHMP kinase family. Homoserine kinase subfamily.

It localises to the cytoplasm. The enzyme catalyses L-homoserine + ATP = O-phospho-L-homoserine + ADP + H(+). It functions in the pathway amino-acid biosynthesis; L-threonine biosynthesis; L-threonine from L-aspartate: step 4/5. Functionally, catalyzes the ATP-dependent phosphorylation of L-homoserine to L-homoserine phosphate. The polypeptide is Homoserine kinase (Streptococcus mutans serotype c (strain ATCC 700610 / UA159)).